Reading from the N-terminus, the 431-residue chain is Trigger factor (431 aa).

A PPIase FKBP-type domain is found at 165–250 (TDTAVFDFEG…LHQIKTKKIP (86 aa)).

It belongs to the FKBP-type PPIase family. Tig subfamily.

The protein resides in the cytoplasm. The catalysed reaction is [protein]-peptidylproline (omega=180) = [protein]-peptidylproline (omega=0). Involved in protein export. Acts as a chaperone by maintaining the newly synthesized protein in an open conformation. Functions as a peptidyl-prolyl cis-trans isomerase. The protein is Trigger factor of Aster yellows witches'-broom phytoplasma (strain AYWB).